The chain runs to 102 residues: NADH-quinone oxidoreductase subunit K (102 aa).

The next 3 helical transmembrane spans lie at 5 to 25, 31 to 51, and 62 to 82; these read LAHY…GIFL, IILL…FVAF, and VFVF…LAIL.

The protein belongs to the complex I subunit 4L family. NDH-1 is composed of 14 different subunits. Subunits NuoA, H, J, K, L, M, N constitute the membrane sector of the complex.

Its subcellular location is the cell inner membrane. It carries out the reaction a quinone + NADH + 5 H(+)(in) = a quinol + NAD(+) + 4 H(+)(out). Its function is as follows. NDH-1 shuttles electrons from NADH, via FMN and iron-sulfur (Fe-S) centers, to quinones in the respiratory chain. The immediate electron acceptor for the enzyme in this species is believed to be ubiquinone. Couples the redox reaction to proton translocation (for every two electrons transferred, four hydrogen ions are translocated across the cytoplasmic membrane), and thus conserves the redox energy in a proton gradient. The sequence is that of NADH-quinone oxidoreductase subunit K from Bordetella parapertussis (strain 12822 / ATCC BAA-587 / NCTC 13253).